The following is a 214-amino-acid chain: Nucleoplasmin-2 (214 aa).

A disordered region spans residues 119 to 214 (ERYEASDLTW…ARAKKPGFKK (96 aa)). A compositionally biased stretch (acidic residues) spans 127 to 155 (TWEEEEEEEGEEEEEEEEDDEDEDADISL). An acidic tract A2 region spans residues 129–152 (EEEEEEEGEEEEEEEEDDEDEDAD). The Bipartite nuclear localization signal signature appears at 165 to 180 (KRLVPQKQASVAKKKK). The span at 181–197 (LEKEEEEIRASVRDKSP) shows a compositional bias: basic and acidic residues. Residues 198–214 (VKKAKATARAKKPGFKK) are compositionally biased toward basic residues.

This sequence belongs to the nucleoplasmin family. In terms of assembly, homopentamer, when bound to H2A-H2B dimers only. Homodecamer of two stacked pentamers, when bound to H2A-H2B dimers and H3-H4 tetramers simultaneously.

The protein resides in the nucleus. Functionally, core histones chaperone involved in chromatin reprogramming, specially during fertilization and early embryonic development. Probably involved in sperm DNA decondensation during fertilization. The polypeptide is Nucleoplasmin-2 (NPM2) (Homo sapiens (Human)).